The primary structure comprises 273 residues: Ribosomal RNA small subunit methyltransferase I (273 aa).

It belongs to the methyltransferase superfamily. RsmI family.

Its subcellular location is the cytoplasm. It catalyses the reaction cytidine(1402) in 16S rRNA + S-adenosyl-L-methionine = 2'-O-methylcytidine(1402) in 16S rRNA + S-adenosyl-L-homocysteine + H(+). Catalyzes the 2'-O-methylation of the ribose of cytidine 1402 (C1402) in 16S rRNA. The polypeptide is Ribosomal RNA small subunit methyltransferase I (Xylella fastidiosa (strain 9a5c)).